Reading from the N-terminus, the 218-residue chain is Probable GTP-binding protein EngB (218 aa).

In terms of domain architecture, EngB-type G spans 44-218 (DRIEVCFAGR…LRATIATIET (175 aa)). GTP-binding positions include 52 to 59 (GRSNVGKS), 79 to 83 (GRTQE), 97 to 100 (DLPG), 164 to 167 (TKSD), and 198 to 200 (TSS). Mg(2+) contacts are provided by Ser-59 and Thr-81.

It belongs to the TRAFAC class TrmE-Era-EngA-EngB-Septin-like GTPase superfamily. EngB GTPase family. The cofactor is Mg(2+).

Its function is as follows. Necessary for normal cell division and for the maintenance of normal septation. The chain is Probable GTP-binding protein EngB from Jannaschia sp. (strain CCS1).